Here is a 69-residue protein sequence, read N- to C-terminus: Pancreatic secretory trypsin inhibitor (69 aa).

The region spanning Thr-8–Glu-65 is the Kazal-like domain. Disulfide bonds link Cys-14–Cys-45, Cys-23–Cys-42, and Cys-31–Cys-63.

Its subcellular location is the secreted. In terms of biological role, this is a trypsin inhibitor, its physiological function is to prevent the trypsin-catalyzed premature activation of zymogens within the pancreas. This chain is Pancreatic secretory trypsin inhibitor (SPINK1), found in Struthio camelus (Common ostrich).